The chain runs to 182 residues: Small ribosomal subunit protein uS4c (182 aa).

The tract at residues 12–31 is disordered; the sequence is PGFTSKRPRSGSDLKNPLRS. Positions 82–143 constitute an S4 RNA-binding domain; it reads MRLDNILFRL…KQRSKALIQN (62 aa).

Belongs to the universal ribosomal protein uS4 family. In terms of assembly, part of the 30S ribosomal subunit. Contacts protein S5. The interaction surface between S4 and S5 is involved in control of translational fidelity.

It is found in the plastid. The protein localises to the chloroplast. One of the primary rRNA binding proteins, it binds directly to 16S rRNA where it nucleates assembly of the body of the 30S subunit. In terms of biological role, with S5 and S12 plays an important role in translational accuracy. In Hymenocallis littoralis (Beach spider-lily), this protein is Small ribosomal subunit protein uS4c (rps4).